A 333-amino-acid chain; its full sequence is UDP-N-acetylglucosamine 4,6-dehydratase (inverting) (333 aa).

Residues 19–22 (TGSF), 43–48 (SRDELK), 67–68 (DV), A87, K91, and 129–130 (LS) each bind NADP(+). Position 91 (K91) interacts with substrate. K133 is an active-site residue. Y141 and K145 together coordinate NADP(+). Position 173 (N173) interacts with substrate. 174–178 (VVGSR) contributes to the NADP(+) binding site. Substrate is bound by residues V181, T199, R258, and E261.

Belongs to the polysaccharide synthase family. In terms of assembly, homohexamer. The cofactor is NADP(+).

The catalysed reaction is UDP-N-acetyl-alpha-D-glucosamine = UDP-2-acetamido-2,6-dideoxy-beta-L-arabino-hex-4-ulose + H2O. In terms of biological role, catalyzes the first step in the biosynthesis of pseudaminic acid, a sialic-acid-like sugar that is used to modify flagellin. Has both C6 dehydratase and C5 epimerase activities that result in the production of both UDP-2-acetamido-2,6-dideoxy-beta-L-arabino-4-hexulose and UDP-2-acetamido-2,6-dideoxy-alpha-D-xylo-4-hexulose. This Helicobacter pylori (strain ATCC 700392 / 26695) (Campylobacter pylori) protein is UDP-N-acetylglucosamine 4,6-dehydratase (inverting) (pseB).